A 528-amino-acid chain; its full sequence is Capsule biosynthesis protein CapD proenzyme (528 aa).

A signal peptide spans 1–26; the sequence is MNSFKWGKKIILFCLIVSLMGGIGVS. Thr-352 acts as the Nucleophile in catalysis. Poly-gamma-D-glutamate-binding positions include Thr-352, 429–432, and Arg-520; that span reads GGNR.

This sequence belongs to the gamma-glutamyltransferase family. As to quaternary structure, this enzyme consists of two polypeptide chains, which are synthesized in precursor form from a single polypeptide. In terms of processing, cleaved by autocatalysis into a large and a small subunit.

It functions in the pathway capsule biogenesis; capsule polysaccharide biosynthesis. Transpeptidase that cleaves the poly-gamma-D-glutamate capsule and catalyzes the formation of an amide bond with the side-chain amino group of meso-diaminopimelic acid (m-DAP) in the peptidoglycan scaffold. Degradation of the high-molecular weight capsule (H-capsule) to the lower-molecular weight capsule (L-capsule), which is released from the bacterial cell surface. The production of L-capsule is essential to mediate escape from host defenses. The protein is Capsule biosynthesis protein CapD proenzyme (capD) of Bacillus anthracis.